Reading from the N-terminus, the 79-residue chain is Orally active insecticidal peptide (79 aa).

A signal peptide spans 1–19 (MRVLFIIAGLALLSVVCYT). Positions 20 to 44 (SEMKERSSFNEVLSEFFAADEPQER) are excised as a propeptide. Intrachain disulfides connect C46/C61, C53/C66, and C60/C73. The residue at position 77 (A77) is an Alanine amide.

This sequence belongs to the neurotoxin 03 (Tx2) family. 01 subfamily. In terms of tissue distribution, expressed by the venom gland.

The protein localises to the secreted. Functionally, probable ion channel inhibitor. Shows insecticidal activity when injected into mealworms. This is Orally active insecticidal peptide from Selenotypus plumipes (Australian featherleg tarantula).